Here is a 145-residue protein sequence, read N- to C-terminus: Cell division protein SepF (145 aa).

Positions Asp-21–Pro-41 are disordered. Residues Pro-23–Pro-41 show a composition bias toward basic and acidic residues.

The protein belongs to the SepF family. Homodimer. Interacts with FtsZ.

It is found in the cytoplasm. In terms of biological role, cell division protein that is part of the divisome complex and is recruited early to the Z-ring. Probably stimulates Z-ring formation, perhaps through the cross-linking of FtsZ protofilaments. Its function overlaps with FtsA. In Caldicellulosiruptor saccharolyticus (strain ATCC 43494 / DSM 8903 / Tp8T 6331), this protein is Cell division protein SepF.